The sequence spans 285 residues: Tropomyosin-2 (285 aa).

Residues 1-277 (MDAIKKKMQA…KDIGDDLDTA (277 aa)) are a coiled coil. Residues 103 to 133 (EERLATATAKLSEASQAADESERARKVLENR) are disordered. The segment covering 122 to 133 (ESERARKVLENR) has biased composition (basic and acidic residues).

It belongs to the tropomyosin family. In terms of assembly, homodimer.

Functionally, tropomyosin, in association with the troponin complex, plays a central role in the calcium dependent regulation of muscle contraction. The protein is Tropomyosin-2 of Bombyx mori (Silk moth).